A 378-amino-acid chain; its full sequence is tRNA (guanine(26)-N(2))-dimethyltransferase (378 aa).

In terms of domain architecture, Trm1 methyltransferase spans 4–374 (KEVTEGKVRI…KGYEEIIRCV (371 aa)). The S-adenosyl-L-methionine site is built by Arg-44, Arg-69, Asp-87, Asp-114, and Ala-115. Zn(2+) is bound by residues Cys-246, Cys-249, Cys-263, and Cys-266.

Belongs to the class I-like SAM-binding methyltransferase superfamily. Trm1 family.

The enzyme catalyses guanosine(26) in tRNA + 2 S-adenosyl-L-methionine = N(2)-dimethylguanosine(26) in tRNA + 2 S-adenosyl-L-homocysteine + 2 H(+). In terms of biological role, dimethylates a single guanine residue at position 26 of a number of tRNAs using S-adenosyl-L-methionine as donor of the methyl groups. In Saccharolobus islandicus (strain Y.G.57.14 / Yellowstone #1) (Sulfolobus islandicus), this protein is tRNA (guanine(26)-N(2))-dimethyltransferase.